The sequence spans 179 residues: Shikimate kinase (179 aa).

22–27 (GTGKSS) serves as a coordination point for ATP. Residue Ser-26 coordinates Mg(2+). Residues Asp-44, Arg-68, and Gly-90 each contribute to the substrate site. Arg-128 contributes to the ATP binding site. Arg-147 contributes to the substrate binding site.

This sequence belongs to the shikimate kinase family. In terms of assembly, monomer. It depends on Mg(2+) as a cofactor.

The protein resides in the cytoplasm. It catalyses the reaction shikimate + ATP = 3-phosphoshikimate + ADP + H(+). It functions in the pathway metabolic intermediate biosynthesis; chorismate biosynthesis; chorismate from D-erythrose 4-phosphate and phosphoenolpyruvate: step 5/7. Functionally, catalyzes the specific phosphorylation of the 3-hydroxyl group of shikimic acid using ATP as a cosubstrate. This Geobacter metallireducens (strain ATCC 53774 / DSM 7210 / GS-15) protein is Shikimate kinase.